We begin with the raw amino-acid sequence, 143 residues long: Probable prefoldin subunit 2 (143 aa).

This sequence belongs to the prefoldin subunit beta family. In terms of assembly, heterohexamer of two PFD-alpha type and four PFD-beta type subunits.

Functionally, binds specifically to cytosolic chaperonin (c-CPN) and transfers target proteins to it. Binds to nascent polypeptide chain and promotes folding in an environment in which there are many competing pathways for nonnative proteins. In Drosophila melanogaster (Fruit fly), this protein is Probable prefoldin subunit 2.